The following is a 2298-amino-acid chain: Non-reducing polyketide synthase pgmA (2298 aa).

The N-terminal acylcarrier protein transacylase domain (SAT) stretch occupies residues leucine 8–leucine 333. The interval tyrosine 336–glutamine 361 is disordered. Positions lysine 340–serine 349 are enriched in polar residues. One can recognise a Ketosynthase family 3 (KS3) domain in the interval arginine 360–aspartate 798. Residues cysteine 532, histidine 667, and histidine 714 each act as for beta-ketoacyl synthase activity in the active site. The segment at valine 901–glutamine 1193 is acyl/malonyl transferases. Catalysis depends on serine 994, which acts as the For acyl/malonyl transferase activity. The segment at histidine 1283–leucine 1415 is N-terminal hotdog fold. Residues histidine 1283–lysine 1589 form the PKS/mFAS DH domain. The segment at lysine 1294–arginine 1586 is product template (PT) domainn. Residue histidine 1315 is the Proton acceptor; for dehydratase activity of the active site. The C-terminal hotdog fold stretch occupies residues valine 1438–lysine 1589. The active-site Proton donor; for dehydratase activity is the aspartate 1502. The tract at residues tyrosine 1619–serine 1642 is disordered. Positions proline 1641–glutamate 1716 constitute a Carrier 1 domain. Serine 1675 carries the post-translational modification O-(pantetheine 4'-phosphoryl)serine. The disordered stretch occupies residues glutamate 1716 to aspartate 1762. Residues glycine 1751–leucine 1760 show a composition bias toward polar residues. Residues lysine 1765 to aspartate 1840 enclose the Carrier 2 domain. Serine 1799 carries the post-translational modification O-(pantetheine 4'-phosphoryl)serine. The tract at residues valine 1927–glycine 2178 is reductase (R) domain.

It functions in the pathway pigment biosynthesis. It participates in secondary metabolite biosynthesis. Functionally, non-reducing polyketide synthase; part of the gene cluster that mediates the biosynthesis of pleosporalin A, ascomycone A, as well as a third cryptic naphthoquinone derived pigment, all responsible for the coloration of conidia. The non-reducing polyketide synthase pgmA is responsible for the condensation of seven acetyl-CoA units to produce the cyclized heptaketide 3-acetonyl-1,6,8-trihydroxy-2-naphthaldehyde. The pathway begins with the biosynthesis of the cyclized heptaketide 3-acetonyl-1,6,8-trihydroxy-2-naphthaldehyde by the NR-PKS pgmA. The C-6 hydroxyl group is further methylated by the O-methyltransferase pgmB to yield fusarubinaldehyde which is in turn oxidized by the cytochrome P450 monooxygenase pgmC at C-9. The C-1 hydroxyl group is then methylated spontaneously. Although pgmE, pgmD and pgmH are essential for the production of pleosporalin A, it is not the case for the 2 other final products and it remains difficult to assign a specific function to each enzyme. PgmF and pgmG seem not to be involved in pigment biosynthesis although they were regulated by the cluster-specific transcription factor pgmR. The polypeptide is Non-reducing polyketide synthase pgmA (Aspergillus terreus (strain NIH 2624 / FGSC A1156)).